Here is a 395-residue protein sequence, read N- to C-terminus: Axin-like protein 1 (395 aa).

An RGS domain is found at 4–132 (RSKTFSDRIL…TTTADVSNTW (129 aa)). The tract at residues 190–230 (QETKNSSETEEEKKKERSADPYGSDGFAPPPQSTQTHTLRN) is disordered. The segment covering 194-208 (NSSETEEEKKKERSA) has biased composition (basic and acidic residues). One can recognise a DIX domain in the interval 301 to 386 (EIQKLTVELR…RITAICRMCP (86 aa)).

In terms of assembly, interacts with bar-1, dsh-2, gsk-3, and mig-5.

Its function is as follows. Works in parallel with pry-1 in negatively regulating bar-1 signaling in vulval precursor cells and Q neuroblasts. Shown to have a role in excretory cell development. The polypeptide is Axin-like protein 1 (axl-1) (Caenorhabditis briggsae).